Here is a 146-residue protein sequence, read N- to C-terminus: Large ribosomal subunit protein uL15 (146 aa).

Residues 1-42 (MTIKLHDLQPARGSKTTRTRVGRGEASKGKTAGRGTKGTKAR) form a disordered region.

The protein belongs to the universal ribosomal protein uL15 family. Part of the 50S ribosomal subunit.

Functionally, binds to the 23S rRNA. The protein is Large ribosomal subunit protein uL15 of Mycobacterium leprae (strain Br4923).